The following is a 322-amino-acid chain: Lignin-forming anionic peroxidase (322 aa).

Positions 1 to 27 (MNTPTQSFRAKAAIFSLLLLSCMQCHA) are cleaved as a signal peptide. Gln-28 is subject to Pyrrolidone carboxylic acid. Intrachain disulfides connect Cys-38-Cys-118, Cys-71-Cys-76, Cys-124-Cys-318, and Cys-203-Cys-229. The active-site Proton acceptor is His-69. Ca(2+) is bound by residues Asp-70, Val-73, Gly-75, Asp-77, and Ser-79. Pro-166 serves as a coordination point for substrate. His-196 contributes to the heme b binding site. Thr-197 contributes to the Ca(2+) binding site. N-linked (GlcNAc...) asparagine glycosylation is present at Asn-213. Asp-242, Thr-245, and Asp-250 together coordinate Ca(2+).

Belongs to the peroxidase family. Classical plant (class III) peroxidase subfamily. Ca(2+) serves as cofactor. Requires heme b as cofactor. Mesophyll protoplasts and to a much lesser extent, roots and germinating seeds.

It is found in the secreted. The enzyme catalyses 2 a phenolic donor + H2O2 = 2 a phenolic radical donor + 2 H2O. Removal of H(2)O(2), oxidation of toxic reductants, biosynthesis and degradation of lignin, suberization, auxin catabolism, response to environmental stresses such as wounding, pathogen attack and oxidative stress. These functions might be dependent on each isozyme/isoform in each plant tissue. Functionally, plays an integral role in secondary cell wall biosynthesis by the polymerization of cinnamyl alcohols into lignin and by forming rigid cross-links between cellulose, pectin, hydroxy-proline-rich glycoproteins, and lignin. This is Lignin-forming anionic peroxidase from Nicotiana sylvestris (Wood tobacco).